The sequence spans 206 residues: Nucleoside triphosphate pyrophosphatase (206 aa).

Aspartate 71 (proton acceptor) is an active-site residue.

The protein belongs to the Maf family. Requires a divalent metal cation as cofactor.

The protein resides in the cytoplasm. It catalyses the reaction a ribonucleoside 5'-triphosphate + H2O = a ribonucleoside 5'-phosphate + diphosphate + H(+). The enzyme catalyses a 2'-deoxyribonucleoside 5'-triphosphate + H2O = a 2'-deoxyribonucleoside 5'-phosphate + diphosphate + H(+). Its function is as follows. Nucleoside triphosphate pyrophosphatase. May have a dual role in cell division arrest and in preventing the incorporation of modified nucleotides into cellular nucleic acids. This is Nucleoside triphosphate pyrophosphatase from Rippkaea orientalis (strain PCC 8801 / RF-1) (Cyanothece sp. (strain PCC 8801)).